A 425-amino-acid chain; its full sequence is Adenylosuccinate synthetase (425 aa).

Residues 12 to 18 (GDEGKGK) and 40 to 42 (GHT) contribute to the GTP site. Asp13 acts as the Proton acceptor in catalysis. Positions 13 and 40 each coordinate Mg(2+). IMP contacts are provided by residues 13–16 (DEGK), 38–41 (NAGH), Thr127, Arg141, Gln222, Thr237, and Arg301. The Proton donor role is filled by His41. Residue 297-303 (AVTGRPR) coordinates substrate. GTP-binding positions include Arg303, 329 to 331 (KID), and 411 to 413 (SVG).

The protein belongs to the adenylosuccinate synthetase family. As to quaternary structure, homodimer. Requires Mg(2+) as cofactor.

It is found in the cytoplasm. It carries out the reaction IMP + L-aspartate + GTP = N(6)-(1,2-dicarboxyethyl)-AMP + GDP + phosphate + 2 H(+). Its pathway is purine metabolism; AMP biosynthesis via de novo pathway; AMP from IMP: step 1/2. Functionally, plays an important role in the de novo pathway of purine nucleotide biosynthesis. Catalyzes the first committed step in the biosynthesis of AMP from IMP. The polypeptide is Adenylosuccinate synthetase (Fusobacterium nucleatum subsp. nucleatum (strain ATCC 25586 / DSM 15643 / BCRC 10681 / CIP 101130 / JCM 8532 / KCTC 2640 / LMG 13131 / VPI 4355)).